A 327-amino-acid polypeptide reads, in one-letter code: Tetraspanin-4 (327 aa).

The Cytoplasmic segment spans residues 1-6 (MRSRSN). A helical transmembrane segment spans residues 7–27 (LIGLINFFTFLLSIPILGGGI). The Extracellular segment spans residues 28-43 (WLSSRANSTDCLRFLQ). An N-linked (GlcNAc...) asparagine glycan is attached at Asn-34. A helical membrane pass occupies residues 44 to 64 (WPLIIIGISIMVISLAGIAGA). Residues 65–75 (CYQNKFLMWLY) lie on the Cytoplasmic side of the membrane. Residues 76–96 (LFTMFFVIAALIGFTIFAYVV) traverse the membrane as a helical segment. The Extracellular segment spans residues 97-235 (TDKGSGRFVM…LGSLKKSWRK (139 aa)). Asn-187 is a glycosylation site (N-linked (GlcNAc...) asparagine). The chain crosses the membrane as a helical span at residues 236 to 256 (VSVINIVVVIILVIFYVIACA). Residues 257-287 (AYQNVKRMYNDEPVGEARMTNLILVIFKFKE) are Cytoplasmic-facing. A helical membrane pass occupies residues 288 to 308 (ILVQFFFGIVFLLLFNGLMVC). Over 309–327 (CCNDKFAFSVFFFGYVTYA) the chain is Extracellular.

It belongs to the tetraspanin (TM4SF) family.

It is found in the membrane. May be involved in the regulation of cell differentiation. This is Tetraspanin-4 (TET4) from Arabidopsis thaliana (Mouse-ear cress).